The sequence spans 898 residues: DNA topoisomerase 1 (898 aa).

One can recognise a Toprim domain in the interval 2–126 (SKLVIVESPT…IKRMVFHEIT (125 aa)). Residues E8 and D95 each coordinate Mg(2+). The Topo IA-type catalytic domain occupies 141-583 (DENLVHAQET…GFFLGESGLE (443 aa)). The interaction with DNA stretch occupies residues 175–180 (SAGRVQ). Catalysis depends on Y320, which acts as the O-(5'-phospho-DNA)-tyrosine intermediate. The disordered stretch occupies residues 840–898 (AEKAGSGKKTSRKKATTTAKGTKKTTSKKASATGTAKKTTTKRTTRKKAASPDQSSEAG). The span at 848–866 (KTSRKKATTTAKGTKKTTS) shows a compositional bias: basic residues. Residues 867 to 877 (KKASATGTAKK) show a composition bias toward low complexity. A compositionally biased stretch (basic residues) spans 878–888 (TTTKRTTRKKA).

It belongs to the type IA topoisomerase family. Monomer. It depends on Mg(2+) as a cofactor.

The catalysed reaction is ATP-independent breakage of single-stranded DNA, followed by passage and rejoining.. Its function is as follows. Releases the supercoiling and torsional tension of DNA, which is introduced during the DNA replication and transcription, by transiently cleaving and rejoining one strand of the DNA duplex. Introduces a single-strand break via transesterification at a target site in duplex DNA. The scissile phosphodiester is attacked by the catalytic tyrosine of the enzyme, resulting in the formation of a DNA-(5'-phosphotyrosyl)-enzyme intermediate and the expulsion of a 3'-OH DNA strand. The free DNA strand then undergoes passage around the unbroken strand, thus removing DNA supercoils. Finally, in the religation step, the DNA 3'-OH attacks the covalent intermediate to expel the active-site tyrosine and restore the DNA phosphodiester backbone. The polypeptide is DNA topoisomerase 1 (Synechocystis sp. (strain ATCC 27184 / PCC 6803 / Kazusa)).